Consider the following 204-residue polypeptide: Ribonuclease HII (204 aa).

The RNase H type-2 domain maps to 13–204 (GPVAGCDEAG…VRRAARLHSS (192 aa)). The a divalent metal cation site is built by D19, E20, and D113.

The protein belongs to the RNase HII family. Mn(2+) serves as cofactor. Requires Mg(2+) as cofactor.

The protein localises to the cytoplasm. The enzyme catalyses Endonucleolytic cleavage to 5'-phosphomonoester.. Endonuclease that specifically degrades the RNA of RNA-DNA hybrids. This is Ribonuclease HII from Cutibacterium acnes (strain DSM 16379 / KPA171202) (Propionibacterium acnes).